A 101-amino-acid chain; its full sequence is Iron-sulfur cluster assembly protein CyaY (101 aa).

This sequence belongs to the frataxin family.

Functionally, involved in iron-sulfur (Fe-S) cluster assembly. May act as a regulator of Fe-S biogenesis. This chain is Iron-sulfur cluster assembly protein CyaY, found in Rickettsia akari (strain Hartford).